We begin with the raw amino-acid sequence, 127 residues long: Glycine cleavage system H protein (127 aa).

The Lipoyl-binding domain maps to 22-104; sequence NVRIGITDYA…YDKAWMIVVK (83 aa). K63 is subject to N6-lipoyllysine.

Belongs to the GcvH family. As to quaternary structure, the glycine cleavage system is composed of four proteins: P, T, L and H. The cofactor is (R)-lipoate.

In terms of biological role, the glycine cleavage system catalyzes the degradation of glycine. The H protein shuttles the methylamine group of glycine from the P protein to the T protein. Its function is as follows. Is also involved in protein lipoylation via its role as an octanoyl/lipoyl carrier protein intermediate. This chain is Glycine cleavage system H protein, found in Geobacillus kaustophilus (strain HTA426).